The following is a 185-amino-acid chain: Ribosome-recycling factor (185 aa).

This sequence belongs to the RRF family.

The protein resides in the cytoplasm. Its function is as follows. Responsible for the release of ribosomes from messenger RNA at the termination of protein biosynthesis. May increase the efficiency of translation by recycling ribosomes from one round of translation to another. This chain is Ribosome-recycling factor, found in Saccharopolyspora erythraea (strain ATCC 11635 / DSM 40517 / JCM 4748 / NBRC 13426 / NCIMB 8594 / NRRL 2338).